A 223-amino-acid polypeptide reads, in one-letter code: Bone marrow proteoglycan (223 aa).

Positions 1 to 16 (MKFPLLLALLVGGASA) are cleaved as a signal peptide. A propeptide spans 17 to 106 (LHLSSETSDS…TSLMGDSGCK (90 aa)) (acidic). Residues 20 to 81 (SSETSDSKSP…PGDEGAVSGQ (62 aa)) form a disordered region. Threonine 23 carries an O-linked (GalNAc...) threonine; partial glycan. Serine 24 carries O-linked (GalNAc...) serine glycosylation. O-linked (Xyl...) (chondroitin sulfate) serine glycosylation occurs at serine 66. The region spanning 124–223 (SVCRRCYRGT…VKRRPFICSY (100 aa)) is the C-type lectin domain. 2 disulfide bridges follow: cysteine 126-cysteine 221 and cysteine 198-cysteine 213.

Post-translationally, nitrated.

It is found in the secreted. In terms of biological role, cytotoxin and helminthotoxin. MBP also induces non-cytolytic histamine release from basophils. It is involved in antiparasitic defense mechanisms and immune hypersensitivity reactions. The sequence is that of Bone marrow proteoglycan (Prg2) from Mus musculus (Mouse).